We begin with the raw amino-acid sequence, 132 residues long: uncharacterized protein (132 aa).

WD repeat units follow at residues 14–53 and 58–97; these read DLQD…LEIL and AHDD…LANV.

This is an uncharacterized protein from Acanthamoeba polyphaga (Amoeba).